A 134-amino-acid chain; its full sequence is Protein YhfA (134 aa).

The sequence is that of Protein YhfA (yhfA) from Escherichia coli O157:H7.